The primary structure comprises 860 residues: Endo-1,4-beta-xylanase B (860 aa).

Residues 1-20 (MKFSSANKILFSGLVASANA) form the signal peptide. In terms of domain architecture, GH10 spans 21–324 (YDLLKDYAGD…KPVYNTLLNI (304 aa)). E144 (proton donor) is an active-site residue. The active-site Nucleophile is E255. A disulfide bridge connects residues C278 and C284. N-linked (GlcNAc...) asparagine glycans are attached at residues N295, N309, N359, and N374. Polar residues-rich tracts occupy residues 330–362 (RPAS…NKSK) and 371–418 (LPGN…NSKT). Residues 330–793 (RPASSSAKTL…TKTLPGGACK (464 aa)) form a disordered region. Residues 375–382 (KSKTLPGG) form repeat 1. The segment at 375-782 (KSKTLPGGNS…GGKSKTLPGG (408 aa)) is 47 X 8 AA tandem repeats of [SKN]-S-K-T-L-P-G-G. An N-linked (GlcNAc...) asparagine glycan is attached at N390. Repeat unit 2 spans residues 391-398 (KSKTLPGG). The N-linked (GlcNAc...) asparagine glycan is linked to N406. 45 repeat units span residues 415 to 422 (NSKTLPGG), 431 to 438 (NSKTLPGG), 439 to 446 (KSKTLPGG), 447 to 454 (NSKTLPGG), 455 to 462 (KSKTLPGG), 463 to 470 (NSKTLPGG), 471 to 478 (SSKTLPGG), 479 to 486 (KSKTLPGG), 487 to 494 (NSKTLPGG), 495 to 502 (SSKTLPGG), 503 to 510 (KSKTLPGG), 511 to 518 (SSKTLPGG), 519 to 526 (KSKTLPGG), 527 to 534 (NSKTLPGG), 535 to 542 (NSKTLPGG), 543 to 550 (SSKTLPGG), 551 to 558 (KSKTLPGG), 559 to 566 (NSKTLPGG), 567 to 574 (SSKTLPGG), 575 to 582 (KSKTLPGG), 583 to 590 (NSKTLPGG), 591 to 598 (NSKTLPGG), 599 to 606 (KSKTLPGG), 607 to 614 (NSKTLPGG), 615 to 622 (SSKTLPGG), 623 to 630 (KSKTLPGG), 631 to 638 (SSKTLPGG), 639 to 646 (KSKTLPGG), 647 to 654 (NSKTLPGG), 655 to 662 (NSKTLPGG), 663 to 670 (SSKTLPGG), 671 to 678 (KSKTLPGG), 679 to 686 (SSKTLPGG), 687 to 694 (KSKTLPGG), 695 to 702 (NSKTLPGG), 703 to 710 (KSKTLPGG), 711 to 718 (NSKTLPGG), 719 to 726 (KSKTLPGG), 727 to 734 (NSKTLPGG), 735 to 742 (KSKTLPGG), 743 to 750 (NSKTLPGG), 751 to 758 (SSKTLPGG), 759 to 766 (KSKTLPGG), 767 to 774 (NSKTLPGG), and 775 to 782 (KSKTLPGG). Composition is skewed to polar residues over residues 461-474 (GGNS…SSKT) and 485-498 (GGNS…SSKT). 4 stretches are compositionally biased toward polar residues: residues 525–546 (GGNS…SSKT), 557–570 (GGNS…SSKT), 581–594 (GGNS…NSKT), and 605–618 (GGNS…SSKT). Residues 645–666 (GGNSKTLPGGNSKTLPGGSSKT) show a composition bias toward polar residues. Polar residues predominate over residues 741–754 (GGNSKTLPGGSSKT). The CBM1 domain maps to 824 to 860 (NCAAKWGQCGGNGFNGPTCCQNGSRCQFVNEWYSQCL). An N-linked (GlcNAc...) asparagine glycan is attached at N845.

Belongs to the glycosyl hydrolase 10 (cellulase F) family.

It is found in the secreted. The catalysed reaction is Endohydrolysis of (1-&gt;4)-beta-D-xylosidic linkages in xylans.. It participates in glycan degradation; xylan degradation. In terms of biological role, endo-1,4-beta-xylanase involved in the hydrolysis of xylan, a major structural heterogeneous polysaccharide found in plant biomass representing the second most abundant polysaccharide in the biosphere, after cellulose. Hydrolyzes both unsubstituted (oat spelts) and highly substituted (rye and wheat) forms of arabinoxylanslans. The polypeptide is Endo-1,4-beta-xylanase B (xynB) (Neocallimastix patriciarum (Rumen fungus)).